We begin with the raw amino-acid sequence, 359 residues long: Very-long-chain (3R)-3-hydroxyacyl-CoA dehydratase (359 aa).

Topologically, residues 1 to 144 (MSALTPHVYW…RKDPFLGLKK (144 aa)) are cytoplasmic. In terms of domain architecture, CS spans 3–92 (ALTPHVYWAQ…QEEVWWNRLT (90 aa)). The stretch at 109 to 133 (LDESDAEMELREKEEKINKVSFESR) forms a coiled coil. Residues 145-165 (GFLFMYNLVQFLGYSWIFVNM) traverse the membrane as a helical segment. Residues 166-186 (TVRLFILGQDSFYDTFHTIAD) are Lumenal-facing. The chain crosses the membrane as a helical span at residues 187–207 (VMYFCQMLAIMEVINPAVGLV). The Cytoplasmic portion of the chain corresponds to 208 to 209 (KT). Residues 210 to 230 (GVMPAFIQVMGRNFILFVIFG) form a helical membrane-spanning segment. Residues 231-239 (SLEDMQNKP) lie on the Lumenal side of the membrane. The helical transmembrane segment at 240–260 (VVFFVFYLWSTIEIFRYPFYM) threads the bilayer. Residues 261–277 (LACIDTEWKLLTWLRYT) lie on the Cytoplasmic side of the membrane. Residues 278–298 (IWMPLYPLGVLAEAVAVIQSI) traverse the membrane as a helical segment. Active-site residues include Y283 and E290. Over 299-317 (PIFDETKLLSIPLPKATGL) the chain is Lumenal. Residues 318 to 338 (SLSFSYILQLYLVVMFLGLFI) form a helical membrane-spanning segment. Over 339 to 359 (NFRHLFKQRTRRFRTKKRKAN) the chain is Cytoplasmic.

It belongs to the very long-chain fatty acids dehydratase HACD family.

Its subcellular location is the endoplasmic reticulum membrane. The catalysed reaction is a very-long-chain (3R)-3-hydroxyacyl-CoA = a very-long-chain (2E)-enoyl-CoA + H2O. The enzyme catalyses (3R)-hydroxyhexadecanoyl-CoA = (2E)-hexadecenoyl-CoA + H2O. It functions in the pathway lipid metabolism; fatty acid biosynthesis. Catalyzes the third of the four reactions of the long-chain fatty acids elongation cycle. This endoplasmic reticulum-bound enzymatic process, allows the addition of two carbons to the chain of long- and very long-chain fatty acids/VLCFAs per cycle. This enzyme catalyzes the dehydration of the 3-hydroxyacyl-CoA intermediate into trans-2,3-enoyl-CoA, within each cycle of fatty acid elongation. Thereby, it participates in the production of VLCFAs of different chain lengths that are involved in multiple biological processes as precursors of membrane lipids and lipid mediators. Involved in Rac1-signaling pathways leading to the modulation of gene expression. This Danio rerio (Zebrafish) protein is Very-long-chain (3R)-3-hydroxyacyl-CoA dehydratase.